The chain runs to 1059 residues: Disks large-associated protein 2 (1059 aa).

2 disordered regions span residues 31–56 (GEPEEEEGGDLAQPGLSFPGPAEEDI) and 244–311 (TKSH…SDST). Residues 244-261 (TKSHSLEGSSKSNINGTK) show a composition bias toward polar residues. The segment covering 262 to 271 (SEGRMDDHHQ) has biased composition (basic and acidic residues). Residues 272 to 285 (SHLSKHSKRSKSKE) show a composition bias toward basic residues. 4 positions are modified to phosphoserine: S302, S308, S390, and S456. Disordered regions lie at residues 446–466 (GDEESGESDSSPKTSPTVALR) and 632–669 (VTAQSSTESTQDAYQDSRAQRMSPWPQDSRGGLYNSMD). A compositionally biased stretch (polar residues) spans 632–645 (VTAQSSTESTQDAY). A phosphoserine mark is found at S667, S670, S673, and S720. Residues 723 to 756 (VQDSEFPDHQPYPRSDVETATDSDTESRGLREYH) form a disordered region. T743 carries the phosphothreonine modification. At S745 the chain carries Phosphoserine. The segment covering 747–756 (TESRGLREYH) has biased composition (basic and acidic residues). Phosphoserine is present on residues S776, S811, S983, and S1012. The interval 985–1024 (ERKEERKIPPPIPKKPPKGKFPITREKSLDLPDRQRQEAR) is disordered. Residues 1007 to 1024 (ITREKSLDLPDRQRQEAR) show a composition bias toward basic and acidic residues.

It belongs to the SAPAP family. As to quaternary structure, interacts with DLG4/PSD-95. In terms of tissue distribution, expressed in various brain areas.

The protein resides in the cell membrane. Its subcellular location is the postsynaptic density. It localises to the synapse. Its function is as follows. May play a role in the molecular organization of synapses and neuronal cell signaling. Could be an adapter protein linking ion channel to the subsynaptic cytoskeleton. May induce enrichment of PSD-95/SAP90 at the plasma membrane. This chain is Disks large-associated protein 2, found in Rattus norvegicus (Rat).